Consider the following 565-residue polypeptide: Sulfite reductase [NADPH] hemoprotein beta-component (565 aa).

The [4Fe-4S] cluster site is built by Cys429, Cys435, Cys474, and Cys478. Cys478 contacts siroheme.

This sequence belongs to the nitrite and sulfite reductase 4Fe-4S domain family. Alpha(8)-beta(8). The alpha component is a flavoprotein, the beta component is a hemoprotein. Siroheme serves as cofactor. It depends on [4Fe-4S] cluster as a cofactor.

The enzyme catalyses hydrogen sulfide + 3 NADP(+) + 3 H2O = sulfite + 3 NADPH + 4 H(+). The protein operates within sulfur metabolism; hydrogen sulfide biosynthesis; hydrogen sulfide from sulfite (NADPH route): step 1/1. Functionally, component of the sulfite reductase complex that catalyzes the 6-electron reduction of sulfite to sulfide. This is one of several activities required for the biosynthesis of L-cysteine from sulfate. This is Sulfite reductase [NADPH] hemoprotein beta-component from Shewanella pealeana (strain ATCC 700345 / ANG-SQ1).